Reading from the N-terminus, the 467-residue chain is Chlorophenol O-methyltransferase (467 aa).

The tract at residues 1–41 (MAELRAPSSLSTERNGSASNTDVDKQKLNHLYQNGNKKTGS) is disordered. Composition is skewed to polar residues over residues 8 to 21 (SSLSTERNGSASNT) and 31 to 41 (LYQNGNKKTGS). An S-adenosyl-L-methionine-binding site is contributed by aspartate 320. Histidine 368 (proton acceptor) is an active-site residue.

This sequence belongs to the class I-like SAM-binding methyltransferase superfamily. Cation-independent O-methyltransferase family.

The catalysed reaction is 2,4,6-trichlorophenol + S-adenosyl-L-methionine = 2,4,6-trichloroanisole + S-adenosyl-L-homocysteine. Its activity is regulated as follows. S-adenosyl-L-homocysteine acts as a competitive inhibitor. Also strongly inhibited by low concentrations of several metal ions, such as Cu(2+), Hg(2+), Zn(2+), and Ag(+), and to a lesser extent by p-chloromercuribenzoic acid, but it is not significantly affected by several thiols or other thiol reagents. Its function is as follows. Chlorophenol O-methyltransferase that methylates chlorophenols into chloroanisoles which are thought to be responsible for cork taint of wines. The only single chlorophenol (CP) methylated is 2-CP; neither 3-CP nor 4-CP are effective substrates. Within the dichlorophenols (DCPs), 2,4-DCP supports the highest rate of O-methylation, and the activity decreases in the following order: 2,3-DCP, 2,5-DCP, 2,6-DCP, and 3,4-DCP. Within the trichlorophenol (TCP) group, the maximal activity is observed with 2,3,4-TCP, whereas there is increasingly reduced activity with 2,4,5-TCP, 2,4,6-TCP, and 2,3,6-TCP. The only tetrachlorophenol (TeCP) that is methylated is 2,3,4,5-TeCP, since no activity can be detected with 2,3,4,6-TeCP and 2,3,5,6-TeCP. Is also able to methylate other halogenated phenols containing fluoro or bromo substituents, whereas other hydroxylated compounds, such as hydroxylated benzoic acids, hydroxybenzaldehydes, phenol, 2-metoxyphenol, and dihydroxybenzene, were not methylated. In Trichoderma longibrachiatum, this protein is Chlorophenol O-methyltransferase.